The following is a 572-amino-acid chain: Secreted triacylglycerol lipase LIP6 (572 aa).

The signal sequence occupies residues 1–23 (MYSTSLLRWLVVALVSAVPLVTA). Cys117 and Cys291 form a disulfide bridge. Catalysis depends on Ser202, which acts as the Nucleophile. The active site involves Asp351. Asn360 carries N-linked (GlcNAc...) asparagine glycosylation. His385 is an active-site residue. The disordered stretch occupies residues 468–572 (KGGVWNDVLK…SSRRHVARFM (105 aa)). Positions 491 to 511 (PESKKATKKYKSESKAEKKQP) are enriched in basic and acidic residues. Residues 512-525 (DSIPSSSSKSSSDN) show a composition bias toward low complexity. N-linked (GlcNAc...) asparagine glycosylation occurs at Asn525. Positions 528–540 (AHAKYHAHGHGHG) are enriched in basic residues. A compositionally biased stretch (low complexity) spans 541–562 (HASSNSNNGHSHSAKESSTSKG). The span at 563–572 (SSRRHVARFM) shows a compositional bias: basic residues.

It belongs to the AB hydrolase superfamily. Lipase family. Class Lip subfamily.

Its subcellular location is the secreted. The protein resides in the cell wall. The enzyme catalyses a triacylglycerol + H2O = a diacylglycerol + a fatty acid + H(+). It catalyses the reaction a monoacylglycerol + H2O = glycerol + a fatty acid + H(+). It carries out the reaction a diacylglycerol + H2O = a monoacylglycerol + a fatty acid + H(+). Its function is as follows. Secreted lipase involved in Dandruff and seborrheic dermatitis (D/SD) probably via lipase-mediated breakdown of sebaceous lipids and release of irritating free fatty acids. Shows only minimal activity against triolein. Mostly converts monoolein to di- and triolein, while free fatty acids are only produced in low amounts. The protein is Secreted triacylglycerol lipase LIP6 of Malassezia globosa (strain ATCC MYA-4612 / CBS 7966) (Dandruff-associated fungus).